The chain runs to 585 residues: Glutamate decarboxylase 2 (585 aa).

Low complexity predominate over residues 1–14 (MASPGSGFWSFGSE). Residues 1–24 (MASPGSGFWSFGSEDGSGDSENPG) form a disordered region. 4 positions are modified to phosphoserine: serine 3, serine 6, serine 10, and serine 13. Residues cysteine 30 and cysteine 45 are each lipidated (S-palmitoyl cysteine). 181–183 (QLS) serves as a coordination point for substrate. Residue lysine 396 is modified to N6-(pyridoxal phosphate)lysine. Position 558 (arginine 558) interacts with substrate.

It belongs to the group II decarboxylase family. Homodimer. Pyridoxal 5'-phosphate is required as a cofactor. In terms of processing, phosphorylated; which does not affect kinetic parameters or subcellular location. Post-translationally, palmitoylated; which is required for presynaptic clustering.

It is found in the cytoplasm. The protein resides in the cytosol. It localises to the cytoplasmic vesicle. The protein localises to the presynaptic cell membrane. Its subcellular location is the golgi apparatus membrane. The catalysed reaction is L-glutamate + H(+) = 4-aminobutanoate + CO2. Its function is as follows. Catalyzes the production of GABA. This is Glutamate decarboxylase 2 from Homo sapiens (Human).